Here is a 104-residue protein sequence, read N- to C-terminus: N(4)-acetylcytidine amidohydrolase (104 aa).

An ASCH domain is found at 6–94; sequence ITFFQRFQND…IAEIYPNQTQ (89 aa). Lys-21 (proton acceptor) is an active-site residue. Residue Thr-24 is the Nucleophile of the active site. Catalysis depends on Glu-74, which acts as the Proton donor.

It belongs to the N(4)-acetylcytidine amidohydrolase family.

The catalysed reaction is N(4)-acetylcytidine + H2O = cytidine + acetate + H(+). The enzyme catalyses N(4)-acetyl-2'-deoxycytidine + H2O = 2'-deoxycytidine + acetate + H(+). It catalyses the reaction N(4)-acetylcytosine + H2O = cytosine + acetate + H(+). Functionally, catalyzes the hydrolysis of N(4)-acetylcytidine (ac4C). The protein is N(4)-acetylcytidine amidohydrolase (yqfB) of Salmonella dublin (strain CT_02021853).